We begin with the raw amino-acid sequence, 368 residues long: Endoglucanase (368 aa).

Residues 1–21 form the signal peptide; sequence MNVLRSGLVTMLLLAAFSVQA. Glu-55 (proton donor) is an active-site residue. The active-site Nucleophile is the Asp-116.

Belongs to the glycosyl hydrolase 8 (cellulase D) family.

The protein resides in the secreted. The enzyme catalyses Endohydrolysis of (1-&gt;4)-beta-D-glucosidic linkages in cellulose, lichenin and cereal beta-D-glucans.. The protein operates within glycan metabolism; bacterial cellulose biosynthesis. Its function is as follows. Hydrolyzes carboxymethylcellulose. This chain is Endoglucanase (bcsZ), found in Escherichia coli O157:H7.